Here is a 27-residue protein sequence, read N- to C-terminus: Toxin Bcg III 21.00 (27 aa).

The protein resides in the secreted. The protein localises to the nematocyst. In terms of biological role, possible voltage-gated potassium channel (Kv) blocker. The polypeptide is Toxin Bcg III 21.00 (Bunodosoma cangicum (Sea anemone)).